The following is a 142-amino-acid chain: Hemoglobin subunit alpha (142 aa).

The region spanning 2–142 (VLSAADKTNV…VSTVLTSKYR (141 aa)) is the Globin domain. Position 4 is a phosphoserine (S4). K8 is subject to N6-succinyllysine. The residue at position 9 (T9) is a Phosphothreonine. Position 12 is an N6-succinyllysine (K12). Residue K17 is modified to N6-acetyllysine; alternate. K17 is modified (N6-succinyllysine; alternate). Y25 carries the phosphotyrosine modification. K41 bears the N6-succinyllysine mark. S50 carries the phosphoserine modification. H59 serves as a coordination point for O2. Position 88 (H88) interacts with heme b. S103 bears the Phosphoserine mark. T109 carries the phosphothreonine modification. Phosphoserine occurs at positions 125 and 132. Phosphothreonine occurs at positions 135 and 138. S139 is modified (phosphoserine).

This sequence belongs to the globin family. In terms of assembly, heterotetramer of two alpha chains and two beta chains. As to expression, red blood cells.

In terms of biological role, involved in oxygen transport from the lung to the various peripheral tissues. Hemopressin acts as an antagonist peptide of the cannabinoid receptor CNR1. Hemopressin-binding efficiently blocks cannabinoid receptor CNR1 and subsequent signaling. This is Hemoglobin subunit alpha (HBA) from Equus caballus (Horse).